The sequence spans 148 residues: Antitoxin Xre (148 aa).

This sequence belongs to the MbcA/ParS/Xre antitoxin family. Homodimer. Forms a complex with cognate toxin Rse.

Functionally, antitoxin component of a type II toxin-antitoxin (TA) system. Neutralizes the NAD(+) depleting activity of cognate toxin Res. The sequence is that of Antitoxin Xre from Photorhabdus laumondii subsp. laumondii (strain DSM 15139 / CIP 105565 / TT01) (Photorhabdus luminescens subsp. laumondii).